Here is a 423-residue protein sequence, read N- to C-terminus: Phosphoribosylamine--glycine ligase (423 aa).

The 208-residue stretch at 107–314 (KAFMAKYNIP…LSDLVEAAID (208 aa)) folds into the ATP-grasp domain. 133–194 (VNQKGAPIVI…EDFLQGEEAS (62 aa)) contributes to the ATP binding site. Mg(2+)-binding residues include Glu284 and Asn286.

It belongs to the GARS family. Mg(2+) is required as a cofactor. It depends on Mn(2+) as a cofactor.

It carries out the reaction 5-phospho-beta-D-ribosylamine + glycine + ATP = N(1)-(5-phospho-beta-D-ribosyl)glycinamide + ADP + phosphate + H(+). It participates in purine metabolism; IMP biosynthesis via de novo pathway; N(1)-(5-phospho-D-ribosyl)glycinamide from 5-phospho-alpha-D-ribose 1-diphosphate: step 2/2. The polypeptide is Phosphoribosylamine--glycine ligase (Neisseria meningitidis serogroup B (strain ATCC BAA-335 / MC58)).